The chain runs to 430 residues: Aspartate aminotransferase, mitochondrial (430 aa).

The N-terminal 29 residues, 1-29, are a transit peptide targeting the mitochondrion; it reads MALLHSGRVLSGIAAAFHPGLAAAASARA. The residue at position 48 (T48) is a Phosphothreonine. K59 bears the N6-acetyllysine mark. Residue G65 coordinates substrate. Residue K73 is modified to N6-acetyllysine; alternate. Position 73 is an N6-succinyllysine; alternate (K73). At K82 the chain carries N6-acetyllysine. K90 bears the N6-acetyllysine; alternate mark. N6-succinyllysine; alternate is present on K90. At Y96 the chain carries 3'-nitrotyrosine; alternate. Y96 bears the Phosphotyrosine; alternate mark. N6-acetyllysine; alternate occurs at positions 107 and 122. N6-succinyllysine; alternate is present on residues K107 and K122. S143 bears the Phosphoserine mark. K159 is subject to N6-acetyllysine; alternate. N6-succinyllysine; alternate is present on K159. Residue W162 participates in substrate binding. Residue K185 is modified to N6-acetyllysine; alternate. K185 carries the post-translational modification N6-succinyllysine; alternate. A substrate-binding site is contributed by N215. At K227 the chain carries N6-succinyllysine. Residue K234 is modified to N6-acetyllysine. An N6-acetyllysine; alternate mark is found at K279 and K296. Residue K279 is modified to N6-(pyridoxal phosphate)lysine; alternate. K296 bears the N6-succinyllysine; alternate mark. K302 carries the post-translational modification N6-acetyllysine. At K309 the chain carries N6-acetyllysine; alternate. The residue at position 309 (K309) is an N6-succinyllysine; alternate. The residue at position 313 (R313) is an Asymmetric dimethylarginine. Position 333 is a phosphothreonine (T333). K338 is modified (N6-acetyllysine; alternate). K338 is subject to N6-succinyllysine; alternate. K345 bears the N6-acetyllysine mark. K363 is modified (N6-acetyllysine; alternate). The residue at position 363 (K363) is an N6-succinyllysine; alternate. K364 and K387 each carry N6-acetyllysine. Residues K396 and K404 each carry the N6-acetyllysine; alternate modification. K396 and K404 each carry N6-succinyllysine; alternate. R407 is a substrate binding site.

Belongs to the class-I pyridoxal-phosphate-dependent aminotransferase family. In terms of assembly, homodimer. Requires pyridoxal 5'-phosphate as cofactor.

It is found in the mitochondrion matrix. Its subcellular location is the cell membrane. It carries out the reaction L-aspartate + 2-oxoglutarate = oxaloacetate + L-glutamate. The enzyme catalyses L-kynurenine + 2-oxoglutarate = kynurenate + L-glutamate + H2O. In terms of biological role, catalyzes the irreversible transamination of the L-tryptophan metabolite L-kynurenine to form kynurenic acid (KA). As a member of the malate-aspartate shuttle, it has a key role in the intracellular NAD(H) redox balance. Is important for metabolite exchange between mitochondria and cytosol, and for amino acid metabolism. Facilitates cellular uptake of long-chain free fatty acids. This Macaca fascicularis (Crab-eating macaque) protein is Aspartate aminotransferase, mitochondrial (GOT2).